A 1147-amino-acid chain; its full sequence is Myosin light chain kinase, smooth muscle (1147 aa).

An actin-binding region spans residues 1 to 41; it reads MDFRANLQRQVKPKTVSEEERKVHSPQQVDFRSVLAKKGTP. The interval 1-330 is disordered; it reads MDFRANLQRQ…PPASPGTAPT (330 aa). The segment at 26–41 is calmodulin-binding; that stretch reads PQQVDFRSVLAKKGTP. Positions 43–55 are enriched in pro residues; it reads TPVPEKAPPPKPA. 2 tandem repeats follow at residues 100–111 and 112–123. The interval 100–288 is 16 X 12 AA tandem repeats; that stretch reads SLKPVANAKP…KAVANAKPAE (189 aa). The 3; truncated repeat unit spans residues 124–132; the sequence is TLKPVANAE. Tandem repeats lie at residues 133-144, 145-156, 157-168, 169-180, 181-192, 193-204, 205-216, 217-228, 229-240, 241-252, 253-264, 265-276, and 277-288. The interval 292-692 is actin-binding (calcium/calmodulin-insensitive); it reads PAGKEELKKE…TVTVNTEQKV (401 aa). Residues 293-320 are compositionally biased toward basic and acidic residues; that stretch reads AGKEELKKEVQNDVNCKREKAGAADNEK. 2 consecutive Ig-like C2-type domains span residues 329-417 and 469-557; these read PTFK…CHVT and PQIP…VNLT. A disulfide bond links Cys-350 and Cys-401. Disordered regions lie at residues 424-476 and 644-678; these read SENA…QFPE and SEPS…KEPE. Over residues 459 to 472 the composition is skewed to pro residues; the sequence is PKTPPKAATPPQIP. Residues 565–657 form the Fibronectin type-III domain; it reads PAGTPCASDI…QESELTTVGE (93 aa). Over residues 644–653 the composition is skewed to polar residues; that stretch reads SEPSQESELT. Acidic residues predominate over residues 662–677; the sequence is PKDEVEEVSDDDEKEP. A Phosphoserine modification is found at Ser-670. A Phosphotyrosine; by ABL1 modification is found at Tyr-681. The Protein kinase domain maps to 696 to 951; that stretch reads YDIEERLGSG…CTQCLQHPWL (256 aa). ATP-binding positions include 702-710 and Lys-725; that span reads LGSGKFGQV. The residue at position 807 (Tyr-807) is a Phosphotyrosine; by ABL1. Asp-817 (proton acceptor) is an active-site residue. The residue at position 867 (Tyr-867) is a Phosphotyrosine; by ABL1. A calmodulin-binding region spans residues 943-1006; the sequence is TQCLQHPWLM…SGLSGRKSST (64 aa). Ser-991, Ser-992, Ser-1004, Ser-1005, and Ser-1008 each carry phosphoserine. Residues 999–1019 form a disordered region; it reads LSGRKSSTGSPTSPLTAERLE. The span at 1002–1013 shows a compositional bias: polar residues; that stretch reads RKSSTGSPTSPL. A Phosphothreonine modification is found at Thr-1010. A Phosphoserine modification is found at Ser-1011. Positions 1041–1130 constitute an Ig-like C2-type 3 domain; it reads PYFSKTIRDL…GEATCTAELI (90 aa). A disulfide bridge links Cys-1062 with Cys-1114.

This sequence belongs to the protein kinase superfamily. CAMK Ser/Thr protein kinase family. All isoforms including Telokin bind calmodulin. Interacts with SVIL. Interacts with CTTN; this interaction is reduced during thrombin-induced endothelial cell (EC) contraction but is promoted by the barrier-protective agonist sphingosine 1-phosphate (S1P) within lamellipodia. A complex made of ABL1, CTTN and MYLK regulates cortical actin-based cytoskeletal rearrangement critical to sphingosine 1-phosphate (S1P)-mediated endothelial cell (EC) barrier enhancement. Binds to NAA10/ARD1 and PTK2B/PYK2. It depends on Mg(2+) as a cofactor. Requires Ca(2+) as cofactor. In terms of processing, the C-terminus is deglutamylated by AGTPBP1/CCP1, AGBL1/CCP4 and AGBL4/CCP6, leading to the formation of Myosin light chain kinase, smooth muscle, deglutamylated form. The consequences of C-terminal deglutamylation are unknown. Post-translationally, can probably be down-regulated by phosphorylation. Tyrosine phosphorylation by ABL1 increases kinase activity, reverses MLCK-mediated inhibition of Arp2/3-mediated actin polymerization, and enhances CTTN-binding. Phosphorylation by SRC promotes CTTN binding. Isoform Telokin is found in all smooth muscle tested except the aorta. It is not present in non-muscle tissue.

It localises to the cytoplasm. The protein localises to the cell projection. Its subcellular location is the lamellipodium. The protein resides in the cleavage furrow. It is found in the cytoskeleton. It localises to the stress fiber. It carries out the reaction L-seryl-[myosin light chain] + ATP = O-phospho-L-seryl-[myosin light chain] + ADP + H(+). It catalyses the reaction L-threonyl-[myosin light chain] + ATP = O-phospho-L-threonyl-[myosin light chain] + ADP + H(+). With respect to regulation, all catalytically active isoforms require binding to calcium and calmodulin for activation. Functionally, calcium/calmodulin-dependent myosin light chain kinase implicated in smooth muscle contraction via phosphorylation of myosin light chains (MLC). Also regulates actin-myosin interaction through a non-kinase activity. Phosphorylates PTK2B/PYK2 and myosin light-chains. Involved in the inflammatory response (e.g. apoptosis, vascular permeability, leukocyte diapedesis), cell motility and morphology, airway hyperreactivity and other activities relevant to asthma. Required for tonic airway smooth muscle contraction that is necessary for physiological and asthmatic airway resistance. Necessary for gastrointestinal motility. Implicated in the regulation of endothelial as well as vascular permeability, probably via the regulation of cytoskeletal rearrangements. In the nervous system it has been shown to control the growth initiation of astrocytic processes in culture and to participate in transmitter release at synapses formed between cultured sympathetic ganglion cells. Critical participant in signaling sequences that result in fibroblast apoptosis. Plays a role in the regulation of epithelial cell survival. Required for epithelial wound healing, especially during actomyosin ring contraction during purse-string wound closure. Mediates RhoA-dependent membrane blebbing. Triggers TRPC5 channel activity in a calcium-dependent signaling, by inducing its subcellular localization at the plasma membrane. Promotes cell migration (including tumor cells) and tumor metastasis. PTK2B/PYK2 activation by phosphorylation mediates ITGB2 activation and is thus essential to trigger neutrophil transmigration during acute lung injury (ALI). May regulate optic nerve head astrocyte migration. Probably involved in mitotic cytoskeletal regulation. Regulates tight junction probably by modulating ZO-1 exchange in the perijunctional actomyosin ring. Mediates burn-induced microvascular barrier injury; triggers endothelial contraction in the development of microvascular hyperpermeability by phosphorylating MLC. Essential for intestinal barrier dysfunction. Mediates Giardia spp.-mediated reduced epithelial barrier function during giardiasis intestinal infection via reorganization of cytoskeletal F-actin and tight junctional ZO-1. Necessary for hypotonicity-induced Ca(2+) entry and subsequent activation of volume-sensitive organic osmolyte/anion channels (VSOAC) in cervical cancer cells. The sequence is that of Myosin light chain kinase, smooth muscle (MYLK) from Oryctolagus cuniculus (Rabbit).